The primary structure comprises 499 residues: uncharacterized protein (499 aa).

The RING-type; degenerate zinc finger occupies 10 to 57 (CGICGQEYSEDEKLLIPRILTECGHTICTGCAGKIKGQSSIIACPFDR). Residues 101-147 (NKNGVCDENTNHHASNYCETCDADLCEECWTWIHSISTLAHHEKKMI) form a B box-type; degenerate zinc finger.

This is an uncharacterized protein from Caenorhabditis elegans.